Reading from the N-terminus, the 559-residue chain is Glucans biosynthesis protein G (559 aa).

Positions 1 to 37 (MVSLLSCGTSASSHIVKKALTRLSLAMAAGLCFNLAA) are cleaved as a signal peptide.

It belongs to the OpgD/OpgG family.

The protein resides in the periplasm. Its pathway is glycan metabolism; osmoregulated periplasmic glucan (OPG) biosynthesis. Functionally, involved in the biosynthesis of osmoregulated periplasmic glucans (OPGs). The chain is Glucans biosynthesis protein G from Shewanella frigidimarina (strain NCIMB 400).